We begin with the raw amino-acid sequence, 140 residues long: Putative septation protein SpoVG (140 aa).

Residues 88–127 form a disordered region; it reads VAPQAGGLQGAEEPTAVEPAPQLQDESELPWEPGDDGEGA. A compositionally biased stretch (acidic residues) spans 112–124; it reads DESELPWEPGDDG.

Belongs to the SpoVG family.

Could be involved in septation. The protein is Putative septation protein SpoVG of Symbiobacterium thermophilum (strain DSM 24528 / JCM 14929 / IAM 14863 / T).